Here is a 384-residue protein sequence, read N- to C-terminus: uncharacterized protein (384 aa).

Over residues lysine 327–lysine 339 the composition is skewed to basic residues. Positions lysine 327 to aspartate 358 are disordered.

This is an uncharacterized protein from Magallana gigas (Pacific oyster).